The chain runs to 335 residues: Phenylalanine--tRNA ligase alpha subunit (335 aa).

Residue Glu262 participates in Mg(2+) binding.

This sequence belongs to the class-II aminoacyl-tRNA synthetase family. Phe-tRNA synthetase alpha subunit type 1 subfamily. In terms of assembly, tetramer of two alpha and two beta subunits. It depends on Mg(2+) as a cofactor.

The protein resides in the cytoplasm. The enzyme catalyses tRNA(Phe) + L-phenylalanine + ATP = L-phenylalanyl-tRNA(Phe) + AMP + diphosphate + H(+). The sequence is that of Phenylalanine--tRNA ligase alpha subunit from Prochlorococcus marinus subsp. pastoris (strain CCMP1986 / NIES-2087 / MED4).